A 383-amino-acid chain; its full sequence is tRNA (guanine-N(7)-)-methyltransferase non-catalytic subunit wuho (383 aa).

5 WD repeats span residues 61-101 (NLEV…ALLL), 105-144 (ALAR…APPK), 148-187 (GHLS…DIHS), 191-231 (GHKE…EVLQ), and 289-329 (AGSW…QAES).

Belongs to the WD repeat TRM82 family. In terms of assembly, forms a heterodimer with the catalytic subunit Mettl1. Interacts with mei-P26 and weakly interacts with bgcn; required for the function or formation of the mei-P26-bgcn-bam-sxl complex. Interacts with nanos; may be involved in mei-P26-dependent derepression of the BMP signaling pathway. Interacts with Myc; the interaction may be mediated by mei-P26 and may be involved in the regulation of ribosome biogenesis. In testis, it is present at high level in hub cells, a niche for germline stem cells of testis. Ubiquitously expressed in all testicular cells throughout spermatogenesis. Ubiquitously expressed in all germline and somatic cells of the ovary.

Its subcellular location is the nucleus. It is found in the cytoplasm. It participates in tRNA modification; N(7)-methylguanine-tRNA biosynthesis. In terms of biological role, required for the Mettl1-dependent formation of N(7)-methylguanine at position 46 (m7G46) in tRNA. In the Mettl1-wuho methyltransferase complex, it is required to stabilize and induce conformational changes of the catalytic subunit. Required for binding of nanos mRNA and repression of translation by the mei-P26-bgcn-bam-sxl complex. May cooperate with mei-P26 and nanos to derepress the BMP signaling pathway. May cooperate with mei-P26 to suppress expression of a subset of microRNAs. May cooperate with mei-P26 to regulate bam expression levels in germline cells during gametogenesis. Required to promote mitosis to meiosis transition during gametogenesis. May regulate germline cell division in part by regulating ribosome biogenesis. The polypeptide is tRNA (guanine-N(7)-)-methyltransferase non-catalytic subunit wuho (Drosophila mojavensis (Fruit fly)).